The sequence spans 125 residues: UPF0231 protein in hemN 3'region (125 aa).

This sequence belongs to the UPF0231 family.

The polypeptide is UPF0231 protein in hemN 3'region (Mannheimia haemolytica (Pasteurella haemolytica)).